Reading from the N-terminus, the 239-residue chain is Small ribosomal subunit protein uS2 (239 aa).

It belongs to the universal ribosomal protein uS2 family.

This is Small ribosomal subunit protein uS2 from Lysinibacillus sphaericus (strain C3-41).